Reading from the N-terminus, the 346-residue chain is D-alanine--D-alanine ligase (346 aa).

Positions 134 to 340 (KFLAESLGVK…IDYTYIHSIQ (207 aa)) constitute an ATP-grasp domain. 161-212 (EYPVIIKPVRLGSSIGVSIVKSEAELDYALDVAFEFDNDVIVEPFIDGVKEF) lines the ATP pocket. 3 residues coordinate Mg(2+): D284, E296, and N298.

The protein belongs to the D-alanine--D-alanine ligase family. Mg(2+) serves as cofactor. Mn(2+) is required as a cofactor.

Its subcellular location is the cytoplasm. It catalyses the reaction 2 D-alanine + ATP = D-alanyl-D-alanine + ADP + phosphate + H(+). It participates in cell wall biogenesis; peptidoglycan biosynthesis. Its function is as follows. Cell wall formation. This chain is D-alanine--D-alanine ligase, found in Sulfurovum sp. (strain NBC37-1).